The primary structure comprises 277 residues: S-formylglutathione hydrolase FrmB (277 aa).

Catalysis depends on charge relay system residues Ser-145, Asp-221, and His-254.

The protein belongs to the esterase D family.

The enzyme catalyses S-formylglutathione + H2O = formate + glutathione + H(+). Serine hydrolase involved in the detoxification of formaldehyde. Hydrolyzes S-formylglutathione to glutathione and formate. This chain is S-formylglutathione hydrolase FrmB (frmB), found in Escherichia coli O9:H4 (strain HS).